Reading from the N-terminus, the 296-residue chain is Glycine N-acyltransferase (296 aa).

An N6-acetyllysine; alternate modification is found at Lys16. Lys16 bears the N6-succinyllysine; alternate mark. Lys113 bears the N6-acetyllysine mark. Lys127 and Lys142 each carry N6-acetyllysine; alternate. Lys127 and Lys142 each carry N6-succinyllysine; alternate. Position 159 is an N6-acetyllysine (Lys159). Lys169 carries the N6-succinyllysine modification. Lys183 and Lys256 each carry N6-acetyllysine; alternate. N6-succinyllysine; alternate occurs at positions 183 and 256. Lys267 carries the N6-succinyllysine modification.

It belongs to the glycine N-acyltransferase family.

The protein resides in the mitochondrion. The enzyme catalyses an acyl-CoA + glycine = an N-acylglycine + CoA + H(+). The catalysed reaction is benzoyl-CoA + glycine = N-benzoylglycine + CoA + H(+). In terms of biological role, mitochondrial acyltransferase which transfers an acyl group to the N-terminus of glycine and glutamine, although much less efficiently. Can conjugate a multitude of substrates to form a variety of N-acylglycines, thereby detoxify xenobiotics, such as benzoic acid or salicylic acid, and endogenous organic acids, such as isovaleric acid. This Rattus norvegicus (Rat) protein is Glycine N-acyltransferase (Glyat).